Consider the following 1031-residue polypeptide: Beta-galactosidase (1031 aa).

Substrate-binding residues include Asn-98 and Asp-197. Asp-197 contributes to the Na(+) binding site. Mg(2+) is bound by residues Glu-412, His-414, and Glu-457. Substrate-binding positions include Glu-457 and 533–536 (EYAH). The active-site Proton donor is Glu-457. Residue Glu-533 is the Nucleophile of the active site. Asn-593 contacts Mg(2+). Residues Phe-597 and Asp-600 each coordinate Na(+). The substrate site is built by Asp-600 and Trp-1005.

The protein belongs to the glycosyl hydrolase 2 family. As to quaternary structure, homotetramer. Mg(2+) is required as a cofactor. It depends on Na(+) as a cofactor.

It carries out the reaction Hydrolysis of terminal non-reducing beta-D-galactose residues in beta-D-galactosides.. In Oenococcus oeni (strain ATCC BAA-331 / PSU-1), this protein is Beta-galactosidase.